We begin with the raw amino-acid sequence, 396 residues long: Large ribosomal subunit protein uL4A (396 aa).

Residues 352 to 373 (KAKEKKPDDGKPKAKKPLDAKT) show a composition bias toward basic and acidic residues. Positions 352–374 (KAKEKKPDDGKPKAKKPLDAKTK) are disordered.

This sequence belongs to the universal ribosomal protein uL4 family. Component of the large ribosomal subunit.

The protein localises to the cytoplasm. In terms of biological role, component of the large ribosomal subunit. The ribosome is a large ribonucleoprotein complex responsible for the synthesis of proteins in the cell. The sequence is that of Large ribosomal subunit protein uL4A (rpl4-a) from Xenopus laevis (African clawed frog).